A 160-amino-acid chain; its full sequence is Putative 4-hydroxy-4-methyl-2-oxoglutarate aldolase (160 aa).

Substrate is bound by residues 75–78 (GDLI) and Arg-97. Asp-98 is an a divalent metal cation binding site.

Belongs to the class II aldolase/RraA-like family. As to quaternary structure, homotrimer. A divalent metal cation serves as cofactor.

It carries out the reaction 4-hydroxy-4-methyl-2-oxoglutarate = 2 pyruvate. The enzyme catalyses oxaloacetate + H(+) = pyruvate + CO2. Its function is as follows. Catalyzes the aldol cleavage of 4-hydroxy-4-methyl-2-oxoglutarate (HMG) into 2 molecules of pyruvate. Also contains a secondary oxaloacetate (OAA) decarboxylase activity due to the common pyruvate enolate transition state formed following C-C bond cleavage in the retro-aldol and decarboxylation reactions. The protein is Putative 4-hydroxy-4-methyl-2-oxoglutarate aldolase of Rhodospirillum centenum (strain ATCC 51521 / SW).